Reading from the N-terminus, the 474-residue chain is MPPSGPRAALFLLPSLLLLRAVLAVPLERGAPKEENPATESPDTGLYYHRYLQEVINVLETDGHFREKLQAANAEDIKSGKLSRELDFVSHHVRTKLDELKRQEVSRLRMLLKAKMDAQQEPNIQLDHLNLLKQFEHLDPQNQHTFEARDLELLIQTATRDLAQYDAAHHEEFKRYEMLKEHERRRYLESLGEEQRKEAERKLEEQQRRHREHPKVNVPGSQAQLKEVWEELDGLDPNRFNPKTFFILHDINSDGVLDEQELEALFTKELEKVYDPKNEDDDMREMEEERLRMREHVMKNVDTNQDRLVTLEEFLASTQRKEFGDTGEGWEQGKAGVPLPMAPVLTLQTVEMHPAYTEEELRRFEEELAAREAELNAKAQRLSQETEALGRSQGRLEAQKRELQQAVLQMEQRKQQQQSHNNPAPGPEGQLKFHPDTDDVPVPAPAGDQKDVDASEKKVPEQTPEPPQLDSQHL.

A signal peptide spans 1–24 (MPPSGPRAALFLLPSLLLLRAVLA). Position 83 is a phosphoserine (serine 83). Threonine 145 carries the post-translational modification Phosphothreonine. Residues 147 to 215 (EARDLELLIQ…QQRRHREHPK (69 aa)) are a coiled coil. Basic and acidic residues predominate over residues 190 to 207 (SLGEEQRKEAERKLEEQQ). Residues 190 to 218 (SLGEEQRKEAERKLEEQQRRHREHPKVNV) are disordered. Residues 225-318 (LKEVWEELDG…VTLEEFLAST (94 aa)) form a binds to GNAI2 and GNAI3 region. EF-hand domains are found at residues 237-272 (PNRF…ELEK) and 289-324 (ERLR…KEFG). Aspartate 250, asparagine 252, aspartate 254, glutamate 261, aspartate 302, asparagine 304, aspartate 306, and glutamate 313 together coordinate Ca(2+). The short motif at 300–330 (NVDTNQDRLVTLEEFLASTQRKEFGDTGEGW) is the GBA element. The stretch at 355–422 (AYTEEELRRF…RKQQQQSHNN (68 aa)) forms a coiled coil. Residues 382 to 474 (LSQETEALGR…EPPQLDSQHL (93 aa)) form a disordered region. The residue at position 383 (serine 383) is a Phosphoserine. The span at 448–460 (DQKDVDASEKKVP) shows a compositional bias: basic and acidic residues. Serine 471 carries the post-translational modification Phosphoserine.

This sequence belongs to the nucleobindin family. Interacts (via GBA motif) with guanine nucleotide-binding protein G(i) alpha subunits GNAI1, GNAI2 and GNAI3 with higher affinity for GNAI1 and GNAI3 than for GNAI2. Preferentially interacts with inactive rather than active GNAI3. Interaction with GNAI3 is inhibited when NUCB1 binds calcium, probably due to a conformational change which renders the GBA motif inaccessible. As to expression, expressed in bone where it is detected in the soft tissue in the center of the osteon and in the osteocyte lacuna (at protein level).

The protein resides in the golgi apparatus. The protein localises to the cis-Golgi network membrane. Its subcellular location is the cytoplasm. It is found in the secreted. Its function is as follows. Major calcium-binding protein of the Golgi which may have a role in calcium homeostasis. Acts as a non-receptor guanine nucleotide exchange factor which binds to and activates alpha subunits of guanine nucleotide-binding proteins (G proteins). In Bos taurus (Bovine), this protein is Nucleobindin-1 (NUCB1).